The following is a 328-amino-acid chain: tRNA U34 carboxymethyltransferase (328 aa).

Carboxy-S-adenosyl-L-methionine is bound by residues Lys-91, Trp-105, Lys-110, Gly-130, 181-182 (IE), Met-196, Tyr-200, and Arg-315.

The protein belongs to the class I-like SAM-binding methyltransferase superfamily. CmoB family. In terms of assembly, homotetramer.

It carries out the reaction carboxy-S-adenosyl-L-methionine + 5-hydroxyuridine(34) in tRNA = 5-carboxymethoxyuridine(34) in tRNA + S-adenosyl-L-homocysteine + H(+). Functionally, catalyzes carboxymethyl transfer from carboxy-S-adenosyl-L-methionine (Cx-SAM) to 5-hydroxyuridine (ho5U) to form 5-carboxymethoxyuridine (cmo5U) at position 34 in tRNAs. This chain is tRNA U34 carboxymethyltransferase, found in Pectobacterium carotovorum subsp. carotovorum (strain PC1).